A 152-amino-acid chain; its full sequence is UPF0178 protein swp_1285 (152 aa).

It belongs to the UPF0178 family.

This is UPF0178 protein swp_1285 from Shewanella piezotolerans (strain WP3 / JCM 13877).